The following is a 207-amino-acid chain: Probable nicotinate-nucleotide adenylyltransferase (207 aa).

It belongs to the NadD family.

It carries out the reaction nicotinate beta-D-ribonucleotide + ATP + H(+) = deamido-NAD(+) + diphosphate. It participates in cofactor biosynthesis; NAD(+) biosynthesis; deamido-NAD(+) from nicotinate D-ribonucleotide: step 1/1. Functionally, catalyzes the reversible adenylation of nicotinate mononucleotide (NaMN) to nicotinic acid adenine dinucleotide (NaAD). The protein is Probable nicotinate-nucleotide adenylyltransferase of Desulfitobacterium hafniense (strain Y51).